The primary structure comprises 557 residues: DNA replication factor Cdt1 (557 aa).

Positions 1–25 (MAQSRVTDFYACRRPGLTTPRAKSI) match the PIP-box K+4 motif motif. The segment at 20–113 (PRAKSICLTP…VCPSPVKRTK (94 aa)) is disordered. Phosphothreonine; by MAPK8 is present on T28. Position 30 is a phosphoserine (S30). Positions 65–67 (RRL) match the Cyclin-binding motif motif. The segment covering 69–81 (LPGLDSCPSSLPE) has biased composition (low complexity). The segment covering 82 to 106 (PSSPAEPSPPADPSPPADPGSPVCP) has biased composition (pro residues). S107 is modified (phosphoserine; by MAPK8). Positions 163 to 203 (PSTPDAKVPTEQPCVEKAPAYQRFHALAQPGLPGLVLPYKY) are interaction with GMNN. Residue S392 is modified to Phosphoserine. The segment at 397-427 (RSAEPGSPGTSTPPLPATPPATPPAASPSAL) is disordered. A compositionally biased stretch (pro residues) spans 407–422 (STPPLPATPPATPPAA). Residues 463-557 (LERLPELARV…LAHHVHAEGL (95 aa)) form an interaction with LRWD1 region.

Belongs to the Cdt1 family. As to quaternary structure, interacts with GMNN; the interaction inhibits the binding of the MCM complex to origins of replication. Interacts with MCM6. Interacts with CDC6; are mutually dependent on one another for loading MCM complexes onto chromatin. Interacts with PCNA. Interacts with LRWD1 during G1 phase and during mitosis. Interacts with NDC80 subunit of the NDC80 complex; leading to kinetochore localization. Interacts with KAT7. Interacts with ubiquitin-binding protein FAF1; the interaction is likely to promote CDT1 degradation. Two independent E3 ubiquitin ligase complexes, SCF(SKP2) and the DCX(DTL) complex, mediated CDT1 degradation in S phase. Ubiquitinated by the DCX(DTL) complex, in response to DNA damage, leading to its degradation. Ubiquitination by the DCX(DTL) complex is necessary to ensure proper cell cycle regulation and is PCNA-dependent: interacts with PCNA via its PIP-box, while the presence of the containing the 'K+4' motif in the PIP box, recruit the DCX(DTL) complex, leading to its degradation. Phosphorylation at Thr-28 by CDK2 targets CDT1 for ubiquitynation by SCF(SKP2) E3 ubiquitin ligase and subsequent degradation. The interaction with GMNN protects it against ubiquitination. Deubiquitinated by USP37. Ubiquitinated and degraded by the SCF(FBXO31) complex during the G2 phase to prevent re-replication. Post-translationally, phosphorylation by cyclin A-dependent kinases at Thr-28 targets CDT1 for ubiquitynation by SCF(SKP2) E3 ubiquitin ligase and subsequent degradation. Phosphorylated at Thr-28 by MAPK8/JNK1, which blocks replication licensing in response to stress. Binding to GMNN is not affected by phosphorylation.

It localises to the nucleus. The protein localises to the chromosome. It is found in the centromere. The protein resides in the kinetochore. Its function is as follows. Required for both DNA replication and mitosis. DNA replication licensing factor, required for pre-replication complex assembly. Cooperates with CDC6 and the origin recognition complex (ORC) during G1 phase of the cell cycle to promote the loading of the mini-chromosome maintenance (MCM) complex onto DNA to generate pre-replication complexes (pre-RC). Required also for mitosis by promoting stable kinetochore-microtubule attachments. Potential oncogene. The sequence is that of DNA replication factor Cdt1 from Mus musculus (Mouse).